The chain runs to 173 residues: MAENNGNGSTGAADTGQRQRFQIAKMYLRDVSFEAPGAPEAFRDEWKPQMDVELGTRHQPLGENTYDVVLTITVTARNNERTAYLCEVKQGGVFRLEGFPEADMERVLGAYCPAQLFPFAREAINDLVVKGGFPQLLLAPVNFESLYQQQKQRREQGTSDSAPSGSPDNGGRQ.

The disordered stretch occupies residues 148–173 (QQQKQRREQGTSDSAPSGSPDNGGRQ). Over residues 158 to 167 (TSDSAPSGSP) the composition is skewed to polar residues.

The protein belongs to the SecB family. Homotetramer, a dimer of dimers. One homotetramer interacts with 1 SecA dimer.

The protein resides in the cytoplasm. In terms of biological role, one of the proteins required for the normal export of preproteins out of the cell cytoplasm. It is a molecular chaperone that binds to a subset of precursor proteins, maintaining them in a translocation-competent state. It also specifically binds to its receptor SecA. This Halorhodospira halophila (strain DSM 244 / SL1) (Ectothiorhodospira halophila (strain DSM 244 / SL1)) protein is Protein-export protein SecB.